The primary structure comprises 202 residues: Alpha-S1-casein (202 aa).

Disordered regions lie at residues 1–25 and 51–84; these read RPKL…VLKE and LKEK…VVPI. 2 stretches are compositionally biased toward basic and acidic residues: residues 16–25 and 51–63; these read QDSREKVLKE and LKEK…KEYL. Phosphoserine is present on S18. A compositionally biased stretch (low complexity) spans 70–80; that stretch reads QESSSTSSSEE. Phosphoserine occurs at positions 72, 73, 74, 76, 77, and 78.

The protein belongs to the alpha-casein family. Mammary gland specific. Secreted in milk.

It localises to the secreted. Important role in the capacity of milk to transport calcium phosphate. The protein is Alpha-S1-casein of Equus asinus (Donkey).